A 27-amino-acid chain; its full sequence is rRNA/tRNA 2'-O-methyltransferase fibrillarin (27 aa).

The span at 1–12 shows a compositional bias: gly residues; it reads XFEGRGGFGGRG. Residues 1-27 are disordered; sequence XFEGRGGFGGRGGGDRGGRGXGGFGGG. 4 positions are modified to asymmetric dimethylarginine: Arg5, Arg11, Arg16, and Arg19.

This sequence belongs to the methyltransferase superfamily. Fibrillarin family. In terms of assembly, component of box C/D small nucleolar ribonucleoprotein (snoRNP) particles. It is associated with the U3, U8 and U13 small nuclear RNAs.

It is found in the nucleus. Its subcellular location is the nucleolus. The catalysed reaction is L-glutaminyl-[histone H2A] + S-adenosyl-L-methionine = N(5)-methyl-L-glutaminyl-[histone H2A] + S-adenosyl-L-homocysteine + H(+). Its function is as follows. S-adenosyl-L-methionine-dependent methyltransferase that has the ability to methylate both RNAs and proteins. Involved in pre-rRNA processing. Utilizes the methyl donor S-adenosyl-L-methionine to catalyze the site-specific 2'-hydroxyl methylation of ribose moieties in pre-ribosomal RNA. Site specificity is provided by a guide RNA that base pairs with the substrate. Methylation occurs at a characteristic distance from the sequence involved in base pairing with the guide RNA. Also acts as a protein methyltransferase by mediating methylation of 'Gln-105' of histone H2A (H2AQ105me), a modification that impairs binding of the FACT complex and is specifically present at 35S ribosomal DNA locus. This is rRNA/tRNA 2'-O-methyltransferase fibrillarin from Physarum polycephalum (Slime mold).